Here is a 324-residue protein sequence, read N- to C-terminus: Putative glycosyltransferase R655 (324 aa).

This sequence belongs to the glycosyltransferase 25 family.

This chain is Putative glycosyltransferase R655, found in Acanthamoeba polyphaga (Amoeba).